A 370-amino-acid chain; its full sequence is MQQDKVNLLGLNQKAIEDFFISIGKKKFHARQVFKWIHKKGVIDFDAMTDLGKNLRHKLKDKAQITIPKVVFSKASKDGTHKWLIDVGGSAVETVFIPEEGRGTLCVSSQIGCTLNCSFCSTGKQGFNRNLSAAEVIAQLWIAARTLSKTDGEHDFTVTNIVMMGMGEPLMNFENVVPAMDIMMDDLAYGLSRRKVTLSTSGVVPRIYDLLEQSGVSLAVSLHTPNDMLRNEIVPINKKYNIDELLEACKLYAQKGPHKHITFEYTLMEEVNDNLSDAEELVALLKSREVPAKINLIPFNPYPGTPYKKPSNNRIHRFKEFLQHNGFVTTVRKTRGDDIDAACGQLAGDVMDKTNRKQRYLKKLGDTNAN.

E93 acts as the Proton acceptor in catalysis. A Radical SAM core domain is found at 99 to 337 (EEGRGTLCVS…VTTVRKTRGD (239 aa)). An intrachain disulfide couples C106 to C343. [4Fe-4S] cluster contacts are provided by C113, C117, and C120. Residues 167–168 (GE), S199, 221–223 (SLH), and N300 each bind S-adenosyl-L-methionine. The active-site S-methylcysteine intermediate is the C343.

Belongs to the radical SAM superfamily. RlmN family. [4Fe-4S] cluster serves as cofactor.

The protein localises to the cytoplasm. The catalysed reaction is adenosine(2503) in 23S rRNA + 2 reduced [2Fe-2S]-[ferredoxin] + 2 S-adenosyl-L-methionine = 2-methyladenosine(2503) in 23S rRNA + 5'-deoxyadenosine + L-methionine + 2 oxidized [2Fe-2S]-[ferredoxin] + S-adenosyl-L-homocysteine. The enzyme catalyses adenosine(37) in tRNA + 2 reduced [2Fe-2S]-[ferredoxin] + 2 S-adenosyl-L-methionine = 2-methyladenosine(37) in tRNA + 5'-deoxyadenosine + L-methionine + 2 oxidized [2Fe-2S]-[ferredoxin] + S-adenosyl-L-homocysteine. Specifically methylates position 2 of adenine 2503 in 23S rRNA and position 2 of adenine 37 in tRNAs. m2A2503 modification seems to play a crucial role in the proofreading step occurring at the peptidyl transferase center and thus would serve to optimize ribosomal fidelity. In Francisella tularensis subsp. holarctica (strain LVS), this protein is Dual-specificity RNA methyltransferase RlmN.